The chain runs to 1855 residues: Collagen alpha-1(XXVII) chain (1855 aa).

An N-terminal signal peptide occupies residues 1-48 (MGLARATAGLGPCCPPAPALLGAGLRWGGFLFAWILVSFSCHLASTQG). The propeptide at 49–618 (APEDVDVLQR…PEPTPFLMLM (570 aa)) is N-terminal propeptide. Residues 81-246 (PSGFIFTQRA…NYCAHLRERC (166 aa)) form the Laminin G-like domain. N281 and N349 each carry an N-linked (GlcNAc...) asparagine glycan. Disordered stretches follow at residues 317–428 (DVSK…SATV), 511–580 (PPLG…SQLS), 617–787 (LMGP…GFPG), and 838–1617 (GGVG…HPVQ). Polar residues-rich tracts occupy residues 382 to 427 (LSVT…SSAT) and 520 to 532 (MMPS…STPA). The segment covering 563–573 (TARDASPRDLT) has biased composition (basic and acidic residues). 13 Collagen-like domains span residues 619–673 (GPPG…GDPG), 682–741 (GAKG…PGPV), 751–810 (GYIG…PGPP), 826–885 (GYPG…PGPM), 886–945 (GKAG…EGPM), 946–1005 (GPPG…VGEK), 1006–1047 (GDRG…PGSR), 1048–1105 (GLPG…GAKG), 1108–1155 (GIPG…PGLP), 1156–1215 (GDSG…KGQE), 1216–1275 (GLKG…PGTP), 1276–1330 (GPKG…GEDG), and 1334–1393 (GAPG…KGSK). The interval 619-1612 (GPPGSKGDCG…RGRPGPPGPP (994 aa)) is triple-helical region. The span at 630–663 (PGPPGLPGLPGSPGPRGPRGPPGPFGNPGLPGPP) shows a compositional bias: pro residues. The span at 708-728 (PGAAGHPGEQGQPGPEGSPGA) shows a compositional bias: low complexity. Residues 905–918 (FPGDIGPPGDNGPE) show a composition bias toward low complexity. A compositionally biased stretch (gly residues) spans 1027-1036 (GTPGGVGDPG). 3 stretches are compositionally biased toward low complexity: residues 1083-1095 (RGRP…QGAA), 1121-1131 (LPGEPGSQGPQ), and 1161-1176 (KGDL…QGLI). Basic and acidic residues-rich tracts occupy residues 1196 to 1221 (LKGD…KGEE), 1320 to 1332 (KGEK…DGKT), and 1344 to 1354 (PVGDRGDRGEP). Composition is skewed to low complexity over residues 1369–1378 (RGEPGQQGQP) and 1404–1431 (KAGA…RQGP). Collagen-like domains are found at residues 1433-1492 (GMAG…SGLP), 1493-1552 (GQLG…KGIQ), and 1553-1612 (GPRG…PGPP). Residues 1566 to 1581 (IIGPPGMLGPSGLPGP) are compositionally biased toward low complexity. Residues 1597–1614 (RGPPGPRGRPGPPGPPWH) show a composition bias toward pro residues. Residues 1616 to 1855 (VQFQQDDLEA…RLEVGPACFL (240 aa)) constitute a propeptide, C-terminal propeptide. One can recognise a Fibrillar collagen NC1 domain in the interval 1655-1855 (GEIFKTLHYL…RLEVGPACFL (201 aa)). 3 disulfide bridges follow: C1685–C1717, C1726–C1853, and C1762–C1806. Positions 1703, 1705, 1708, and 1711 each coordinate Ca(2+). N1764 is a glycosylation site (N-linked (GlcNAc...) asparagine).

It belongs to the fibrillar collagen family.

Its subcellular location is the secreted. The protein localises to the extracellular space. The protein resides in the extracellular matrix. Functionally, plays a role during the calcification of cartilage and the transition of cartilage to bone. This chain is Collagen alpha-1(XXVII) chain (Col27a1), found in Rattus norvegicus (Rat).